We begin with the raw amino-acid sequence, 635 residues long: Threonine--tRNA ligase (635 aa).

The 61-residue stretch at 1 to 61 folds into the TGS domain; it reads MIKITLKDGK…HKDSSLEILT (61 aa). Positions 242 to 532 are catalytic; sequence DHRKLGKELD…LIEQYAGAFP (291 aa). Zn(2+) contacts are provided by cysteine 333, histidine 384, and histidine 509.

This sequence belongs to the class-II aminoacyl-tRNA synthetase family. Homodimer. It depends on Zn(2+) as a cofactor.

The protein resides in the cytoplasm. It catalyses the reaction tRNA(Thr) + L-threonine + ATP = L-threonyl-tRNA(Thr) + AMP + diphosphate + H(+). Functionally, catalyzes the attachment of threonine to tRNA(Thr) in a two-step reaction: L-threonine is first activated by ATP to form Thr-AMP and then transferred to the acceptor end of tRNA(Thr). Also edits incorrectly charged L-seryl-tRNA(Thr). The chain is Threonine--tRNA ligase from Clostridium botulinum (strain Loch Maree / Type A3).